The primary structure comprises 237 residues: Phosphoribosylaminoimidazole-succinocarboxamide synthase (237 aa).

This sequence belongs to the SAICAR synthetase family.

The enzyme catalyses 5-amino-1-(5-phospho-D-ribosyl)imidazole-4-carboxylate + L-aspartate + ATP = (2S)-2-[5-amino-1-(5-phospho-beta-D-ribosyl)imidazole-4-carboxamido]succinate + ADP + phosphate + 2 H(+). It participates in purine metabolism; IMP biosynthesis via de novo pathway; 5-amino-1-(5-phospho-D-ribosyl)imidazole-4-carboxamide from 5-amino-1-(5-phospho-D-ribosyl)imidazole-4-carboxylate: step 1/2. The sequence is that of Phosphoribosylaminoimidazole-succinocarboxamide synthase from Alteromonas mediterranea (strain DSM 17117 / CIP 110805 / LMG 28347 / Deep ecotype).